The primary structure comprises 345 residues: ATP-dependent (S)-NAD(P)H-hydrate dehydratase (345 aa).

The YjeF C-terminal domain maps to 9–332 (ILSLARSMIP…DMVGEVYEEV (324 aa)). (6S)-NADPHX-binding positions include G113 and 170 to 176 (NVMEFKR). ATP contacts are provided by residues 208 to 212 (KGPSD) and 241 to 250 (GGLKRVGGQG). D251 contacts (6S)-NADPHX.

It belongs to the NnrD/CARKD family. The cofactor is Mg(2+).

The protein localises to the cytoplasm. The enzyme catalyses (6S)-NADHX + ATP = ADP + phosphate + NADH + H(+). It carries out the reaction (6S)-NADPHX + ATP = ADP + phosphate + NADPH + H(+). Its function is as follows. Catalyzes the dehydration of the S-form of NAD(P)HX at the expense of ATP, which is converted to ADP. Together with NAD(P)HX epimerase, which catalyzes the epimerization of the S- and R-forms, the enzyme allows the repair of both epimers of NAD(P)HX, a damaged form of NAD(P)H that is a result of enzymatic or heat-dependent hydration. The sequence is that of ATP-dependent (S)-NAD(P)H-hydrate dehydratase from Cryptococcus neoformans var. neoformans serotype D (strain JEC21 / ATCC MYA-565) (Filobasidiella neoformans).